The chain runs to 399 residues: Acetate kinase (399 aa).

Residue Asn-10 coordinates Mg(2+). Residue Lys-17 coordinates ATP. Arg-91 serves as a coordination point for substrate. Asp-148 acts as the Proton donor/acceptor in catalysis. Residues 208 to 212 (HLGNG), 283 to 285 (DCR), and 331 to 335 (GIGEN) each bind ATP. Glu-385 contributes to the Mg(2+) binding site.

It belongs to the acetokinase family. In terms of assembly, homodimer. Mg(2+) is required as a cofactor. Mn(2+) serves as cofactor.

It is found in the cytoplasm. The catalysed reaction is acetate + ATP = acetyl phosphate + ADP. The protein operates within metabolic intermediate biosynthesis; acetyl-CoA biosynthesis; acetyl-CoA from acetate: step 1/2. Its function is as follows. Catalyzes the formation of acetyl phosphate from acetate and ATP. Can also catalyze the reverse reaction. The sequence is that of Acetate kinase from Shewanella amazonensis (strain ATCC BAA-1098 / SB2B).